Here is a 472-residue protein sequence, read N- to C-terminus: E1B 55 kDa protein (472 aa).

The interval 1 to 90 is disordered; sequence MERPNPSVGG…GQRGEKRKLE (90 aa). Positions 32-44 are enriched in low complexity; that stretch reads RLLAGAASARSGS. The segment covering 45–57 has biased composition (gly residues); it reads SAGGGGGGGGGGE. 2 positions are modified to phosphoserine: Ser468 and Ser469.

It belongs to the adenoviridae E1B 55 kDa protein family. In terms of assembly, interacts with host PML-4 and PML-5; this interaction promotes efficient subnuclear targeting of E1B-55K to PML nuclear bodies. Interacts with E4-ORF3 protein. Interacts with E4-ORF6 protein.

The protein localises to the host nucleus. It is found in the host cytoplasm. Its function is as follows. Plays a major role to prevent cellular inhibition of viral genome replication. Assembles an SCF-like E3 ubiquitin ligase complex based on the cellular proteins ELOB, ELOC, CUL5 and RBX1, in cooperation with viral E4orf6. This viral RING-type ligase ubiquitinates cellular substrates and targets them to proteasomal degradation: TP53/p53, LIG4, MRE11-RAD50-NBS1 (MRN) complex, ITGA3, DAXX and BLM. E1B-55K probably acts as the substrate-specific adapter of the SCF-like E3 ubiquitin ligase complex. Degradation of host TP53/p53 activity is essential for preventing E1A-induced TP53 accumulation that would otherwise lead to cell apoptosis and growth arrest. E1B-55K also inactivates TP53 transcription-factor activity by binding its transactivation domain. E1B-55K also functions as a SUMO1 E3 ligase for TP53 which causes the latter to be sequestered in promyelocytic leukemia (PML) nuclear bodies thereby contributing to maximal inhibition of TP53 function. The chain is E1B 55 kDa protein from Homo sapiens (Human).